The sequence spans 220 residues: MSFQQRFARALDVGYKNFLSKDAVRNIFAYDNHLRGLVQKECKIHQTPYRVPSDLMVQSASDPARANLFNYSSQLVNHDFFFSGLISPERPSADADLGAINLKPGIDASFGSFGELKSQMVDVGNSVFGDGWLWLVYSPEKSLFSLLCTYNASNAFLWGTGFPKFRTNAIVPLLCVNLWQYAYLDDYGLNGKKMYITKWWDMINWTVVNNRFQATRIESL.

Belongs to the mitochondrion-specific ribosomal protein mS42 family. In terms of assembly, component of the mitochondrial small ribosomal subunit (mt-SSU). Mature yeast 74S mitochondrial ribosomes consist of a small (37S) and a large (54S) subunit. The 37S small subunit contains a 15S ribosomal RNA (15S mt-rRNA) and at least 32 different proteins. The 54S large subunit contains a 21S rRNA (21S mt-rRNA) and at least 45 different proteins. mS43 forms a dimer with mS42, building a large protuberance adjacent to the mRNA channel exit in the mt-SSU body.

It is found in the mitochondrion. Functionally, component of the mitochondrial ribosome (mitoribosome), a dedicated translation machinery responsible for the synthesis of mitochondrial genome-encoded proteins, including at least some of the essential transmembrane subunits of the mitochondrial respiratory chain. The mitoribosomes are attached to the mitochondrial inner membrane and translation products are cotranslationally integrated into the membrane. The protein is Small ribosomal subunit protein mS42 of Schizosaccharomyces pombe (strain 972 / ATCC 24843) (Fission yeast).